The following is a 690-amino-acid chain: Elongation factor G (690 aa).

One can recognise a tr-type G domain in the interval aspartate 8–leucine 283. Residues alanine 17–threonine 24, aspartate 81–histidine 85, and asparagine 135–aspartate 138 contribute to the GTP site.

Belongs to the TRAFAC class translation factor GTPase superfamily. Classic translation factor GTPase family. EF-G/EF-2 subfamily.

It localises to the cytoplasm. Its function is as follows. Catalyzes the GTP-dependent ribosomal translocation step during translation elongation. During this step, the ribosome changes from the pre-translocational (PRE) to the post-translocational (POST) state as the newly formed A-site-bound peptidyl-tRNA and P-site-bound deacylated tRNA move to the P and E sites, respectively. Catalyzes the coordinated movement of the two tRNA molecules, the mRNA and conformational changes in the ribosome. This chain is Elongation factor G, found in Zymomonas mobilis subsp. mobilis (strain ATCC 31821 / ZM4 / CP4).